The sequence spans 124 residues: Small ribosomal subunit protein uS12 (124 aa).

The interval 105-124 is disordered; that stretch reads QGVKNRKQARSRYGAKKEKG. A compositionally biased stretch (basic residues) spans 108-118; that stretch reads KNRKQARSRYG.

The protein belongs to the universal ribosomal protein uS12 family. Part of the 30S ribosomal subunit. Contacts proteins S8 and S17. May interact with IF1 in the 30S initiation complex.

Functionally, with S4 and S5 plays an important role in translational accuracy. In terms of biological role, interacts with and stabilizes bases of the 16S rRNA that are involved in tRNA selection in the A site and with the mRNA backbone. Located at the interface of the 30S and 50S subunits, it traverses the body of the 30S subunit contacting proteins on the other side and probably holding the rRNA structure together. The combined cluster of proteins S8, S12 and S17 appears to hold together the shoulder and platform of the 30S subunit. The polypeptide is Small ribosomal subunit protein uS12 (rpsL) (Mycobacterium bovis (strain ATCC BAA-935 / AF2122/97)).